The primary structure comprises 142 residues: Transcription antitermination protein NusB (142 aa).

Belongs to the NusB family.

Involved in transcription antitermination. Required for transcription of ribosomal RNA (rRNA) genes. Binds specifically to the boxA antiterminator sequence of the ribosomal RNA (rrn) operons. The chain is Transcription antitermination protein NusB from Actinobacillus succinogenes (strain ATCC 55618 / DSM 22257 / CCUG 43843 / 130Z).